A 252-amino-acid polypeptide reads, in one-letter code: Secreted LysM effector LysM1 (252 aa).

The LysM 1 domain maps to 20–64; sequence FAIPGDPGDTCDTLSDRWGITIDIFKSLNPGVNCPNLVANMEYCV. The tract at residues 71–98 is disordered; it reads DTPSTTTTAKPTMTPTSTPTKTTTTSTA. The span at 72-98 shows a compositional bias: low complexity; that stretch reads TPSTTTTAKPTMTPTSTPTKTTTTSTA. LysM domains are found at residues 126–172 and 204–250; these read KFHL…YVCV and KFHL…YVCI.

The protein belongs to the secreted LysM effector family.

Its subcellular location is the secreted. The protein resides in the cell wall. Secreted effector that binds two substrates, chitin and N-linked oligosaccharides associated with human skin glycoproteins. Could provide the pathogen with three important functions including shielding host cell wall chitin from the human immune system, shielding the pathogen's glycoproteins from host degradation and immune surveillance, and helping facilitate pathogen adhesion to human skin. The polypeptide is Secreted LysM effector LysM1 (Trichophyton rubrum (strain ATCC MYA-4607 / CBS 118892) (Athlete's foot fungus)).